A 212-amino-acid chain; its full sequence is Amelotin (212 aa).

A signal peptide spans 1-16 (MKTVVLLLCLLGSAQS). Disordered regions lie at residues 23–42 (PALGAPATKPTPGQVTPLTQ) and 141–212 (PSGQ…NRTK). Polar residues-rich tracts occupy residues 33-42 (TPGQVTPLTQ) and 165-178 (PANQATTPGHTTPA).

It belongs to the amelotin family. O-glycosylated. In terms of processing, phosphorylated by FAM20C in vitro. As to expression, highest expression in the mandible. Found in the basal lamina of maturation stage ameloblasts of incisors and unerupted molars. Also found in the internal basal lamina of junctional epithelium in molars.

The protein resides in the secreted. Is a promoter of calcium phosphate mineralization, playing a critical role in the formation of the compact, mineralized, aprismatic enamel surface layer during the maturation stage of amelogenesis. This Rattus norvegicus (Rat) protein is Amelotin.